Consider the following 307-residue polypeptide: GTPase Era (307 aa).

Positions 17 to 186 constitute an Era-type G domain; it reads RCGFVAIVGR…LELIKPYLPE (170 aa). The interval 25–32 is G1; sequence GRPNVGKS. A GTP-binding site is contributed by 25–32; that stretch reads GRPNVGKS. Positions 51–55 are G2; it reads QTTRN. Residues 72 to 75 are G3; the sequence is DTPG. Residues 72–76 and 133–136 each bind GTP; these read DTPGF and NKID. The G4 stretch occupies residues 133–136; sequence NKID. Residues 165–167 form a G5 region; it reads VSA. In terms of domain architecture, KH type-2 spans 217 to 293; that stretch reads LGEELPYAMN…FLKVWVKVKS (77 aa).

Belongs to the TRAFAC class TrmE-Era-EngA-EngB-Septin-like GTPase superfamily. Era GTPase family. As to quaternary structure, monomer.

The protein resides in the cytoplasm. It localises to the cell inner membrane. In terms of biological role, an essential GTPase that binds both GDP and GTP, with rapid nucleotide exchange. Plays a role in 16S rRNA processing and 30S ribosomal subunit biogenesis and possibly also in cell cycle regulation and energy metabolism. The protein is GTPase Era of Neisseria meningitidis serogroup A / serotype 4A (strain DSM 15465 / Z2491).